A 163-amino-acid polypeptide reads, in one-letter code: Nucleotide-binding protein HSM_1099 (163 aa).

The protein belongs to the YajQ family.

Functionally, nucleotide-binding protein. The polypeptide is Nucleotide-binding protein HSM_1099 (Histophilus somni (strain 2336) (Haemophilus somnus)).